Consider the following 316-residue polypeptide: MNGIVNVLKPPGMSSHDVVDRIRRIFGVKKAGHTGTLDPGAAGVLVVCLGVATRLARFLLGEDKEYRVEITFGMSTSTGDSYGEITDQRDASFLKEHDIIRVLPEFTGEVRQVPPMTSAIKWRGKKLYELAREGLVVERQERAVYIKSLEFIRGSGWGTPSPRALMHLSCSKGTYVRSLCHDMGSRLGCGAHMSFLVRTRAGPFKIADSVTLEELQAAASKGVLERKIIEMDRAVSEYPEVIVKSSAVKAVAAGSKLYIPGVARMPLDLDCGKLVRLTGPDGLLAIAEAGREPFDKEKLFFKPVCVLARQAGRSSN.

The active-site Nucleophile is D38. The 75-residue stretch at 238–312 (YPEVIVKSSA…PVCVLARQAG (75 aa)) folds into the PUA domain.

This sequence belongs to the pseudouridine synthase TruB family. Type 1 subfamily.

The enzyme catalyses uridine(55) in tRNA = pseudouridine(55) in tRNA. In terms of biological role, responsible for synthesis of pseudouridine from uracil-55 in the psi GC loop of transfer RNAs. The sequence is that of tRNA pseudouridine synthase B from Pelotomaculum thermopropionicum (strain DSM 13744 / JCM 10971 / SI).